We begin with the raw amino-acid sequence, 596 residues long: Fructan 1-exohydrolase w3 (596 aa).

An N-terminal signal peptide occupies residues 1–20; it reads MAQAWAFLLPVLVLGSYVTS. Aspartate 75 is a catalytic residue. Asparagine 168, asparagine 236, and asparagine 248 each carry an N-linked (GlcNAc...) asparagine glycan. Cysteine 446 and cysteine 492 form a disulfide bridge.

This sequence belongs to the glycosyl hydrolase 32 family. Expressed in the stem, particularly the penultimate internode. Little expression is detected in roots and in the peduncle part of the stem.

The catalysed reaction is Hydrolysis of terminal, non-reducing (2-&gt;1)-linked beta-D-fructofuranose residues in fructans.. Inhibited by sucrose. Its function is as follows. Hydrolyzes inulin-type beta-(2,1)-fructans and beta-(2,1)-linkages in branched fructans. Has low activity against beta-(2,6)-linked fructans. May play a role as a beta-(2,1)-trimmer during graminan biosynthesis. The polypeptide is Fructan 1-exohydrolase w3 (Triticum aestivum (Wheat)).